A 373-amino-acid polypeptide reads, in one-letter code: Dual-specificity RNA methyltransferase RlmN (373 aa).

Glu94 serves as the catalytic Proton acceptor. A Radical SAM core domain is found at 100–339 (EDDRATLCVS…VIVRKTRGDD (240 aa)). Cys107 and Cys344 are disulfide-bonded. [4Fe-4S] cluster contacts are provided by Cys114, Cys118, and Cys121. Residues 168-169 (GE), Ser200, 222-224 (SIH), and Asn301 contribute to the S-adenosyl-L-methionine site. Cys344 functions as the S-methylcysteine intermediate in the catalytic mechanism.

It belongs to the radical SAM superfamily. RlmN family. It depends on [4Fe-4S] cluster as a cofactor.

The protein localises to the cytoplasm. The enzyme catalyses adenosine(2503) in 23S rRNA + 2 reduced [2Fe-2S]-[ferredoxin] + 2 S-adenosyl-L-methionine = 2-methyladenosine(2503) in 23S rRNA + 5'-deoxyadenosine + L-methionine + 2 oxidized [2Fe-2S]-[ferredoxin] + S-adenosyl-L-homocysteine. It catalyses the reaction adenosine(37) in tRNA + 2 reduced [2Fe-2S]-[ferredoxin] + 2 S-adenosyl-L-methionine = 2-methyladenosine(37) in tRNA + 5'-deoxyadenosine + L-methionine + 2 oxidized [2Fe-2S]-[ferredoxin] + S-adenosyl-L-homocysteine. In terms of biological role, specifically methylates position 2 of adenine 2503 in 23S rRNA and position 2 of adenine 37 in tRNAs. m2A2503 modification seems to play a crucial role in the proofreading step occurring at the peptidyl transferase center and thus would serve to optimize ribosomal fidelity. This is Dual-specificity RNA methyltransferase RlmN from Shewanella denitrificans (strain OS217 / ATCC BAA-1090 / DSM 15013).